The following is a 218-amino-acid chain: MHHNDHSNGMPMSMVFDTSTEITLFFQGWTTTTAASYSLTLLFLFALAVFNRFLGVLKFQLDVKHTQPTEGRVPKLQQPRARRRHAIPKARLSPQPRYMQVAETDTEDEAPFSSAQFLESDAEHTRHEFPSDLIQEPQGPLGTRRWWNVYRRWSWRRDGTGSLLEGLRALVGYALMLAVMTFNVGVLCAVVGGIVVGELLLGRYAQPSLGWQDDACHH.

Helical transmembrane passes span 37-57 (YSLTLLFLFALAVFNRFLGVL) and 176-196 (MLAVMTFNVGVLCAVVGGIVV).

Belongs to the copper transporter (Ctr) (TC 1.A.56) family. SLC31A subfamily.

It localises to the membrane. The enzyme catalyses Cu(2+)(in) = Cu(2+)(out). In terms of biological role, putative copper transporter; part of the crm gene cluster that mediates the biosynthesis of a yet unidentified copper-responsive metabolite. Probably involved in the transport of copper, even if it does not act as a major copper transporter. In contrast to crmA, is not involved in the biosynthesis of fumivalines or fumicicolins. In Aspergillus fumigatus (strain ATCC MYA-4609 / CBS 101355 / FGSC A1100 / Af293) (Neosartorya fumigata), this protein is Putative copper transporter crmD.